A 209-amino-acid polypeptide reads, in one-letter code: Uracil phosphoribosyltransferase (209 aa).

Residues arginine 79, arginine 104, and aspartate 131 to serine 139 each bind 5-phospho-alpha-D-ribose 1-diphosphate. Residues isoleucine 194 and glycine 199 to alanine 201 each bind uracil. Aspartate 200 is a 5-phospho-alpha-D-ribose 1-diphosphate binding site.

The protein belongs to the UPRTase family. Requires Mg(2+) as cofactor.

The catalysed reaction is UMP + diphosphate = 5-phospho-alpha-D-ribose 1-diphosphate + uracil. Its pathway is pyrimidine metabolism; UMP biosynthesis via salvage pathway; UMP from uracil: step 1/1. Allosterically activated by GTP. Its function is as follows. Catalyzes the conversion of uracil and 5-phospho-alpha-D-ribose 1-diphosphate (PRPP) to UMP and diphosphate. This chain is Uracil phosphoribosyltransferase, found in Oceanobacillus iheyensis (strain DSM 14371 / CIP 107618 / JCM 11309 / KCTC 3954 / HTE831).